The chain runs to 408 residues: UDP-N-acetylglucosamine--dolichyl-phosphate N-acetylglucosaminephosphotransferase (408 aa).

The Lumenal segment spans residues 1 to 10 (MWAFPELPMP). Residues 11-38 (LLVNLIGSLMGFVATVTLIPAFRGHFIA) form a helical membrane-spanning segment. The Cytoplasmic portion of the chain corresponds to 39–58 (ARLCGQDLNKSSREQIPESQ). UDP-N-acetyl-alpha-D-glucosamine is bound by residues 44-46 (QDL) and Glu56. Residues 59–78 (GVISGAVFLIILFCFIPFPF) form a helical membrane-spanning segment. Topologically, residues 79-91 (LNCFVEQQCKAFP) are lumenal. Residues 92 to 118 (HHEFVALIGALLAICCMIFLGFADDVL) form a helical membrane-spanning segment. Topologically, residues 119–121 (NLR) are cytoplasmic. Residues 122–143 (WRHKLLLPTAASLPLLMVYFTN) form a helical membrane-spanning segment. Lys125 lines the dolichyl phosphate pocket. Residues 144 to 166 (FGNTTIVVPKPLRPILGLHLDLG) are Lumenal-facing. Asn146 is a glycosylation site (N-linked (GlcNAc...) asparagine). The helical transmembrane segment at 167-186 (ILYYVYMGLLAVFCTNAINI) threads the bilayer. 178 to 186 (VFCTNAINI) is a dolichyl phosphate binding site. Asn185 serves as a coordination point for Mg(2+). Residues 187–192 (LAGING) lie on the Cytoplasmic side of the membrane. Asn191 contacts UDP-N-acetyl-alpha-D-glucosamine. A helical membrane pass occupies residues 193–213 (LEAGQSLVISASIIVFNLVEL). At 214-218 (DGDYR) the chain is on the lumenal side. The chain crosses the membrane as a helical span at residues 219–242 (DDHIFSLYFMIPFFFTTLGLLYHN). Over 243 to 250 (WYPSRVFV) the chain is Cytoplasmic. Residues 251-269 (GDTFCYFAGMTFAVVGILG) form a helical membrane-spanning segment. Asp252 lines the Mg(2+) pocket. At 270-271 (HF) the chain is on the lumenal side. A helical transmembrane segment spans residues 272 to 293 (SKTMLLFFMPQVFNFLYSLPQL). The Cytoplasmic portion of the chain corresponds to 294–375 (LHIIPCPRHR…LLLKVFGPMH (82 aa)). A UDP-N-acetyl-alpha-D-glucosamine-binding site is contributed by 301–303 (RHR). The chain crosses the membrane as a helical span at residues 376 to 400 (ERNLTLLLLLLQVVGSAVTFSIRYQ). The Lumenal segment spans residues 401-408 (LVRLFYDV).

The protein belongs to the glycosyltransferase 4 family. In terms of assembly, homodimer. Mg(2+) serves as cofactor.

It is found in the endoplasmic reticulum membrane. It carries out the reaction a di-trans,poly-cis-dolichyl phosphate + UDP-N-acetyl-alpha-D-glucosamine = an N-acetyl-alpha-D-glucosaminyl-diphospho-di-trans,poly-cis-dolichol + UMP. It functions in the pathway protein modification; protein glycosylation. Its activity is regulated as follows. Inhibited by natural nucleoside antibiotic tunicamycin, which acts as a structural analog and competitor of UDP-GlcNAc. Activated by Man-P-Dol. Activated by manganese. Inhibited by diumycin. Functionally, UDP-N-acetylglucosamine--dolichyl-phosphate N-acetylglucosaminephosphotransferase that operates in the biosynthetic pathway of dolichol-linked oligosaccharides, the glycan precursors employed in protein asparagine (N)-glycosylation. The assembly of dolichol-linked oligosaccharides begins on the cytosolic side of the endoplasmic reticulum membrane and finishes in its lumen. The sequential addition of sugars to dolichol pyrophosphate produces dolichol-linked oligosaccharides containing fourteen sugars, including two GlcNAcs, nine mannoses and three glucoses. Once assembled, the oligosaccharide is transferred from the lipid to nascent proteins by oligosaccharyltransferases. Catalyzes the initial step of dolichol-linked oligosaccharide biosynthesis, transfering GlcNAc-1-P from cytosolic UDP-GlcNAc onto the carrier lipid dolichyl phosphate (P-dolichol), yielding GlcNAc-P-P-dolichol embedded in the cytoplasmic leaflet of the endoplasmic reticulum membrane. The sequence is that of UDP-N-acetylglucosamine--dolichyl-phosphate N-acetylglucosaminephosphotransferase from Bos taurus (Bovine).